The sequence spans 367 residues: Phosphoribosylaminoimidazole-succinocarboxamide synthase (367 aa).

This sequence belongs to the SAICAR synthetase family.

The catalysed reaction is 5-amino-1-(5-phospho-D-ribosyl)imidazole-4-carboxylate + L-aspartate + ATP = (2S)-2-[5-amino-1-(5-phospho-beta-D-ribosyl)imidazole-4-carboxamido]succinate + ADP + phosphate + 2 H(+). It participates in purine metabolism; IMP biosynthesis via de novo pathway; 5-amino-1-(5-phospho-D-ribosyl)imidazole-4-carboxamide from 5-amino-1-(5-phospho-D-ribosyl)imidazole-4-carboxylate: step 1/2. This Aliivibrio fischeri (strain ATCC 700601 / ES114) (Vibrio fischeri) protein is Phosphoribosylaminoimidazole-succinocarboxamide synthase.